A 170-amino-acid chain; its full sequence is Guided entry of tail-anchored proteins factor 1 (170 aa).

Residues 1–6 (MAAGFN) are Lumenal-facing. The chain crosses the membrane as a helical span at residues 7 to 27 (WFLVLSSVFLCNLVKTFLPSI). The Cytoplasmic portion of the chain corresponds to 28-96 (SSFLSKIFHK…KSRTAQQAKM (69 aa)). Positions 35–93 (FHKDADQEMEMRTEIQNMKMELSTISMMDEFARYARLERKINKMTDQLKTLVKSRTAQQ) are interaction with GET3/TRC40. Positions 61 to 91 (MMDEFARYARLERKINKMTDQLKTLVKSRTA) form a coiled coil. A helical membrane pass occupies residues 97–117 (KWIVNIAFYILQAALMISLIL). Topologically, residues 118 to 137 (KYYADPVTVVPSKWIAPLER) are lumenal. The chain crosses the membrane as a helical span at residues 138–158 (LVAFPSGVAGGVGITCWLVVC). Topologically, residues 159-170 (NKVVALILQAVS) are cytoplasmic.

It belongs to the WRB/GET1 family. Component of the Golgi to ER traffic (GET) complex, which is composed of GET1/WRB, CAMLG/GET2 and GET3/TRC40. Within the complex, GET1 and CAMLG form a heterotetramer which is stabilized by phosphatidylinositol binding and which binds to the GET3 homodimer.

Its subcellular location is the endoplasmic reticulum membrane. Functionally, required for the post-translational delivery of tail-anchored (TA) proteins to the endoplasmic reticulum (ER). Together with CAMLG/GET2, acts as a membrane receptor for soluble GET3/TRC40, which recognizes and selectively binds the transmembrane domain of TA proteins in the cytosol. Required to ensure correct topology and ER insertion of CAMLG. This is Guided entry of tail-anchored proteins factor 1 from Danio rerio (Zebrafish).